Consider the following 1039-residue polypeptide: RNA-binding protein Unr (1039 aa).

Residues 49–62 show a composition bias toward polar residues; it reads TTLGLQPQGQGPSP. Disordered regions lie at residues 49-126 and 165-184; these read TTLG…QQQH and SIFG…PSQT. 3 stretches are compositionally biased toward low complexity: residues 63–80, 89–126, and 165–182; these read QQQQ…QHQQ, QQHM…QQQH, and SIFG…ADPS. One can recognise a CSD 1 domain in the interval 186–250; the sequence is RETGIIEKLL…GKPIASQVSK (65 aa). Residues 261 to 337 form the CSD 2; degenerate domain; the sequence is RVTGTVTTEL…GNLGACHIRL (77 aa). Positions 345–413 constitute a CSD 3 domain; it reads KYRGVVCSMK…GREFACNITR (69 aa). The CSD 4; degenerate domain maps to 428–503; sequence VYKGQVLKSL…RDQLQRATSI (76 aa). Positions 517–585 constitute a CSD 5 domain; it reads REQGTIASLK…SRLQAIRIKH (69 aa). The CSD 6; degenerate domain occupies 593-673; that stretch reads FETLVASNIE…KECIAVNVQQ (81 aa). The disordered stretch occupies residues 721-741; that stretch reads QNGYVMHGSPGGSTSSVGSNN. Positions 732–741 are enriched in low complexity; it reads GSTSSVGSNN. Positions 763 to 831 constitute a CSD 7 domain; it reads VYRGFIAVMK…NCLPAENVRM (69 aa). Positions 846–919 constitute a CSD 8; degenerate domain; it reads THNGVVARPL…SGRAACVNAV (74 aa). Residues 922-987 form the CSD 9 domain; sequence KKRATVDSIK…GKSSACNVLK (66 aa).

It belongs to the UNR family. As to quaternary structure, interacts with Sxl; cooperates with Sxl to prevent translation of msl-2 transcripts. Interacts with mle; promoting association between mle and roX2 non-coding RNA. Interacts (via CSD domain 7-9) with pAbp; promoting translation inhibition of msl-2 transcripts.

The protein localises to the cytoplasm. Its function is as follows. RNA-binding protein that acts as a regulator of dosage compensation in both males and females. In males, acts as positive regulator of dosage compensation by promoting assembly of the MSL complex, a multiprotein complex that mediates X-chromosome dosage compensation. Promotes MSL complex assembly via association with roX1 and roX2 non-coding RNA components of the MSL complex, facilitating the interaction between non-coding RNAs and mle. In females, acts as an inhibitor of dosage compensation together with Sxl by preventing production of msl-2 protein, an essential component of the MSL complex. Specifically binds to the 3'-UTR of msl-2 transcripts, and cooperates with Sxl to prevent translation initiation of msl-2 transcripts. Mechanistically, Sxl and Unr inhibit translation initiation by preventing ribosome recruitment after pAbp-mediated recruitment of the eIF4F complex. This is RNA-binding protein Unr from Drosophila melanogaster (Fruit fly).